Consider the following 1567-residue polypeptide: MASQPPQPPSGQPDTQYEEYQSEVITETTNRPTPAADVYEITPTNDVMDDRYEHEHDDYESGAMYETVRTWSPQSRPELVRIASVFSRIDSHPDVAPTTEDGGQLNRRDTLAGVKIGDPVLDPTKPEFDFYKWARMFTHVMEKEGIKRNRTGVMFRNLTVLGSGSAVQYQDTFLSPFAAPFRPGELCGKGRNPEKVILHDFNGAIREGELLMVLGRPGSGCSTFLKAICGELHGLQKKKESIIHYNGVSQHTFKKELRGEAVYSAEDEHHFPHLTVGQTLEFAAAARTPSKRVLGLSRKDFSTHLARVMMSVFGLSHTYNTKVGDDYVRGVSGGERKRVSIAEIALSGAPICCWDNSTRGLDSATALEFTKALKIGSQVGGITQCLAIYQASQAIYDIFDKVIVLYEGRQIFFGPTRIAKQYFEEMGWYCPPRQTTADFLTSVTNPKERIAKEGYENRVPRTAVEFERYWKQSQNNKLLLADMDRFEAEYPLEEGHLEKLRETHGQAQAKHTASKSPYRISVPMQVKLCTVRAYQRLWGDKSSTIATNISQIMMALIIGSLFFDTPQTTDGFFAKGSVIFFAILLNGLMSITEINGLCKATDPIVPNAQRPIVVKHVNFAFYHAYSEALAGIVADIPIKFLLALVFNIIIYFLGGLERSAAKFFIFFLFTFITILTMSAIFRTLAAATKTIPQALALAGVMILALVIYTGFTLQPSYMHPWFKWILYINPIAYAYEALLVNEVHGNRYRCATPIPPYGSGTNFACAVAGAVPGEMSVSGDAWVESSYDYSYAHIWRNLGILLGFLAFFYFVYLVVSELNLSSASSAEFLVFRRGHLPKNFQGSKDEEAAAGGVMHPNDPARLPPTNTNGAAGETAPGGSTVAVIPPQKDIFTWRNVTYDITIKGEPRRLLDNISGWVRPGTLTALMGVSGAGKTTLLDALAQRTTMGVITGDMLVNGRPLDSSFQRKTGYVQQQDLHLETTTVREALRFSADLRQPKSVSRKEKYEYVEDVIKMLSMEDFSEAVVGNPGEGLNVEQRKLLTIGVELAAKPQLLLFLDEPTSGLDSQSSWSIVTFLRKLADNGQAVLSTIHQPSGILFEQFDRLLFLAKGGRTVYFGDIGKNSETLLNYFETHGAEPCGPSENPAEYMLNIVGAGPSGKSKIDWPAVWKESEESRHVQQELDRIQSETSKRNEGHGQSAEKEPGEFAMPFTSQLYCVTTRVFQQYWRTPSYIWGKLLLGLTSALFIGFSFFLQNSSMAGLQNSLFSIFMLTTIFSSLVQQIMPRFVTQRDLFEVRERPSRAYSWKVFLLANIIVEIPYQILLGIIAWASLFYPTFGAHLSSERQGILLLYCVQFFIFASTFAQMIIAGLPDAETAGGIATTMFGLMVTFNGVLQKPNALPGFWRFMWRVSPITYTVGGLAATSLHSREVKCAQNELAIFDPPSGATCAQYLQKLVEAGAPGKLYNPMSTSQCQYCPLSSGDQFLGGSEIHWSDRWRNFGIGWAYIVFNIFATVALYYLIRVRKSSGRPNRIISVITYHLSQFGTYCRAFITGRKEKCPRKREQIGKIY.

A compositionally biased stretch (pro residues) spans 1–11 (MASQPPQPPSG). The disordered stretch occupies residues 1–37 (MASQPPQPPSGQPDTQYEEYQSEVITETTNRPTPAAD). The segment covering 22–32 (SEVITETTNRP) has biased composition (polar residues). Residues N149, N157, and N356 are each glycosylated (N-linked (GlcNAc...) asparagine). Residues 167 to 432 (VQYQDTFLSP…FEEMGWYCPP (266 aa)) form the ABC transporter 1 domain. 6 helical membrane passes run 543-563 (STIA…SLFF), 571-591 (GFFA…LMSI), 636-656 (IPIK…LGGL), 661-681 (AKFF…SAIF), 691-711 (IPQA…YTGF), and 798-818 (LGIL…VSEL). 3 N-linked (GlcNAc...) asparagine glycosylation sites follow: N819, N895, and N912. The ABC transporter 2 domain maps to 891 to 1134 (FTWRNVTYDI…LLNYFETHGA (244 aa)). Position 927-934 (927-934 (GVSGAGKT)) interacts with ATP. Residues 1172-1202 (ESRHVQQELDRIQSETSKRNEGHGQSAEKEP) are disordered. A helical membrane pass occupies residues 1231-1251 (IWGKLLLGLTSALFIGFSFFL). Residue N1253 is glycosylated (N-linked (GlcNAc...) asparagine). The next 5 helical transmembrane spans lie at 1257-1277 (AGLQ…SSLV), 1305-1325 (VFLL…GIIA), 1345-1365 (ILLL…QMII), 1372-1392 (ETAG…NGVL), and 1498-1518 (GIGW…YYLI).

Belongs to the ABC transporter superfamily. ABCG family. PDR (TC 3.A.1.205) subfamily.

It is found in the cell membrane. It catalyses the reaction voriconazole(in) + ATP + H2O = voriconazole(out) + ADP + phosphate + H(+). The catalysed reaction is fluconazole(in) + ATP + H2O = fluconazole(out) + ADP + phosphate + H(+). It carries out the reaction (R)-miconazole(in) + ATP + H2O = (R)-miconazole(out) + ADP + phosphate + H(+). The enzyme catalyses (S)-miconazole(in) + ATP + H2O = (S)-miconazole(out) + ADP + phosphate + H(+). In terms of biological role, pleiotropic ABC efflux transporter that may be involved in the modulation susceptibility to a wide range of unrelated cytotoxic compounds. This chain is ABC multidrug transporter MDR1, found in Trichophyton tonsurans (strain CBS 112818) (Scalp ringworm fungus).